The chain runs to 852 residues: Chitin synthase 1 (852 aa).

Disordered regions lie at residues 27-46 (EDQD…TNYA) and 53-97 (SSLR…QANG). Residues 53–74 (SSLRSQKSANKPTTAQNRNSAA) are compositionally biased toward polar residues. Transmembrane regions (helical) follow at residues 492-509 (RWLN…IHFR), 532-552 (VISL…FYFI), 572-592 (IFDF…ICSM), 601-621 (FLFM…LFCS), 686-706 (FLPY…YAFC), 787-807 (THLV…ITTS), and 830-850 (CGLG…GIFT).

It belongs to the chitin synthase family. Class II subfamily.

It is found in the cell membrane. It catalyses the reaction [(1-&gt;4)-N-acetyl-beta-D-glucosaminyl](n) + UDP-N-acetyl-alpha-D-glucosamine = [(1-&gt;4)-N-acetyl-beta-D-glucosaminyl](n+1) + UDP + H(+). Its function is as follows. Polymerizes chitin, a structural polymer of the cell wall and septum, by transferring the sugar moiety of UDP-GlcNAc to the non-reducing end of the growing chitin polymer. The chain is Chitin synthase 1 (CHS1) from Mucor circinelloides f. lusitanicus (Mucor racemosus var. lusitanicus).